Reading from the N-terminus, the 311-residue chain is 4-hydroxy-tetrahydrodipicolinate synthase (311 aa).

A pyruvate-binding site is contributed by threonine 51. Residue tyrosine 140 is the Proton donor/acceptor of the active site. The active-site Schiff-base intermediate with substrate is lysine 168. Residue isoleucine 209 participates in pyruvate binding.

The protein belongs to the DapA family. In terms of assembly, homotetramer; dimer of dimers.

It is found in the cytoplasm. It carries out the reaction L-aspartate 4-semialdehyde + pyruvate = (2S,4S)-4-hydroxy-2,3,4,5-tetrahydrodipicolinate + H2O + H(+). The protein operates within amino-acid biosynthesis; L-lysine biosynthesis via DAP pathway; (S)-tetrahydrodipicolinate from L-aspartate: step 3/4. In terms of biological role, catalyzes the condensation of (S)-aspartate-beta-semialdehyde [(S)-ASA] and pyruvate to 4-hydroxy-tetrahydrodipicolinate (HTPA). The protein is 4-hydroxy-tetrahydrodipicolinate synthase of Streptococcus pneumoniae (strain Taiwan19F-14).